A 291-amino-acid chain; its full sequence is Ribosomal large subunit pseudouridine synthase B (291 aa).

In terms of domain architecture, S4 RNA-binding spans 3-75 (EKLQKVLARA…ICRVLAYYKP (73 aa)). Asp110 acts as the Nucleophile in catalysis. A disordered region spans residues 256-291 (VEKDRRRMKANQIRRAVKRHSQVSGGRRSGGRNNNG).

Belongs to the pseudouridine synthase RsuA family.

It carries out the reaction uridine(2605) in 23S rRNA = pseudouridine(2605) in 23S rRNA. In terms of biological role, responsible for synthesis of pseudouridine from uracil-2605 in 23S ribosomal RNA. The sequence is that of Ribosomal large subunit pseudouridine synthase B (rluB) from Escherichia coli (strain K12).